The primary structure comprises 198 residues: Protein GrpE (198 aa).

Belongs to the GrpE family. In terms of assembly, homodimer.

The protein localises to the cytoplasm. Participates actively in the response to hyperosmotic and heat shock by preventing the aggregation of stress-denatured proteins, in association with DnaK and GrpE. It is the nucleotide exchange factor for DnaK and may function as a thermosensor. Unfolded proteins bind initially to DnaJ; upon interaction with the DnaJ-bound protein, DnaK hydrolyzes its bound ATP, resulting in the formation of a stable complex. GrpE releases ADP from DnaK; ATP binding to DnaK triggers the release of the substrate protein, thus completing the reaction cycle. Several rounds of ATP-dependent interactions between DnaJ, DnaK and GrpE are required for fully efficient folding. This Vibrio harveyi (Beneckea harveyi) protein is Protein GrpE.